Reading from the N-terminus, the 131-residue chain is Large ribosomal subunit protein eL32 (131 aa).

The protein belongs to the eukaryotic ribosomal protein eL32 family.

The protein is Large ribosomal subunit protein eL32 (RPL32) of Eremothecium gossypii (strain ATCC 10895 / CBS 109.51 / FGSC 9923 / NRRL Y-1056) (Yeast).